We begin with the raw amino-acid sequence, 406 residues long: Dihydroorotase, mitochondrial (406 aa).

The N-terminal 41 residues, Met-1–Lys-41, are a transit peptide targeting the mitochondrion. Zn(2+)-binding residues include His-69, His-71, Lys-155, His-193, His-231, and Asp-305. The residue at position 155 (Lys-155) is an N6-carboxylysine.

Belongs to the metallo-dependent hydrolases superfamily. DHOase family. Class II DHOase subfamily. Zn(2+) serves as cofactor.

It localises to the mitochondrion. It catalyses the reaction (S)-dihydroorotate + H2O = N-carbamoyl-L-aspartate + H(+). It functions in the pathway pyrimidine metabolism; UMP biosynthesis via de novo pathway; (S)-dihydroorotate from bicarbonate: step 3/3. The chain is Dihydroorotase, mitochondrial (PYRC) from Oryza sativa subsp. japonica (Rice).